We begin with the raw amino-acid sequence, 1071 residues long: ATP-dependent helicase/deoxyribonuclease subunit B (1071 aa).

This sequence belongs to the helicase family. AddB/RexB type 2 subfamily. Heterodimer of AddA and RexB. It depends on Mg(2+) as a cofactor.

In terms of biological role, the heterodimer acts as both an ATP-dependent DNA helicase and an ATP-dependent, dual-direction single-stranded exonuclease. Recognizes the chi site generating a DNA molecule suitable for the initiation of homologous recombination. This subunit has 5' -&gt; 3' nuclease activity but not helicase activity. This chain is ATP-dependent helicase/deoxyribonuclease subunit B, found in Streptococcus pyogenes serotype M1.